A 591-amino-acid chain; its full sequence is CTP synthase (591 aa).

The segment at 1–281 (MPQSRTHSRT…DAYVVRQLGL (281 aa)) is amidoligase domain. S23 lines the CTP pocket. S23 contributes to the UTP binding site. ATP-binding positions include 24–29 (SLGKGL) and D81. 2 residues coordinate Mg(2+): D81 and E155. CTP contacts are provided by residues 162 to 164 (DIE), 202 to 207 (KTKPTQ), and K238. Residues 202–207 (KTKPTQ) and K238 each bind UTP. One can recognise a Glutamine amidotransferase type-1 domain in the interval 306–554 (RIALVGKYVD…VDAALKHKLE (249 aa)). Residue G369 coordinates L-glutamine. The active-site Nucleophile; for glutamine hydrolysis is the C396. L-glutamine is bound by residues 397–400 (LGLQ), E419, and R480. Residues H527 and E529 contribute to the active site. The tract at residues 568–591 (AVATDDELADSADRDEVASVDSAG) is disordered.

This sequence belongs to the CTP synthase family. As to quaternary structure, homotetramer.

The enzyme catalyses UTP + L-glutamine + ATP + H2O = CTP + L-glutamate + ADP + phosphate + 2 H(+). It carries out the reaction L-glutamine + H2O = L-glutamate + NH4(+). The catalysed reaction is UTP + NH4(+) + ATP = CTP + ADP + phosphate + 2 H(+). It functions in the pathway pyrimidine metabolism; CTP biosynthesis via de novo pathway; CTP from UDP: step 2/2. With respect to regulation, allosterically activated by GTP, when glutamine is the substrate; GTP has no effect on the reaction when ammonia is the substrate. The allosteric effector GTP functions by stabilizing the protein conformation that binds the tetrahedral intermediate(s) formed during glutamine hydrolysis. Inhibited by the product CTP, via allosteric rather than competitive inhibition. Its function is as follows. Catalyzes the ATP-dependent amination of UTP to CTP with either L-glutamine or ammonia as the source of nitrogen. Regulates intracellular CTP levels through interactions with the four ribonucleotide triphosphates. The protein is CTP synthase of Rhodococcus jostii (strain RHA1).